The sequence spans 178 residues: Ribosome rescue factor SmrB (178 aa).

A Smr domain is found at 99 to 174 (LDLHGLTQMQ…GNAALLILIE (76 aa)).

This sequence belongs to the SmrB family. As to quaternary structure, associates with collided ribosomes, but not with correctly translating polysomes.

Its function is as follows. Acts as a ribosome collision sensor. Detects stalled/collided disomes (pairs of ribosomes where the leading ribosome is stalled and a second ribosome has collided with it) and endonucleolytically cleaves mRNA at the 5' boundary of the stalled ribosome. Stalled/collided disomes form a new interface (primarily via the 30S subunits) that binds SmrB. Cleaved mRNA becomes available for tmRNA ligation, leading to ribosomal subunit dissociation and rescue of stalled ribosomes. The polypeptide is Ribosome rescue factor SmrB (Photorhabdus laumondii subsp. laumondii (strain DSM 15139 / CIP 105565 / TT01) (Photorhabdus luminescens subsp. laumondii)).